The sequence spans 181 residues: S-fimbrial protein subunit SfaA (181 aa).

The first 24 residues, 1–24 (MKLKFISMAVFSALTLGVATNASA), serve as a signal peptide directing secretion. C44 and C84 are disulfide-bonded.

This sequence belongs to the fimbrial protein family.

Its subcellular location is the fimbrium. In terms of biological role, fimbriae (also called pili), polar filaments radiating from the surface of the bacterium to a length of 0.5-1.5 micrometers and numbering 100-300 per cell, enable bacteria to colonize the epithelium of specific host organs. Its function is as follows. The major fimbrial subunit. Interacts with alpha-sialic acid-(2-3)-beta-Gal containing receptors. It belongs to the group of Mrh (Mannose-resistant hemagglutination) fimbrial proteins. This chain is S-fimbrial protein subunit SfaA (sfaA), found in Escherichia coli O6:K15:H31 (strain 536 / UPEC).